Consider the following 224-residue polypeptide: 7-cyano-7-deazaguanine synthase (224 aa).

10–20 is a binding site for ATP; sequence LSGGLDSATVV. 4 residues coordinate Zn(2+): Cys189, Cys199, Cys202, and Cys205.

It belongs to the QueC family. The cofactor is Zn(2+).

The enzyme catalyses 7-carboxy-7-deazaguanine + NH4(+) + ATP = 7-cyano-7-deazaguanine + ADP + phosphate + H2O + H(+). The protein operates within purine metabolism; 7-cyano-7-deazaguanine biosynthesis. Its function is as follows. Catalyzes the ATP-dependent conversion of 7-carboxy-7-deazaguanine (CDG) to 7-cyano-7-deazaguanine (preQ(0)). The sequence is that of 7-cyano-7-deazaguanine synthase from Stutzerimonas stutzeri (strain A1501) (Pseudomonas stutzeri).